A 201-amino-acid polypeptide reads, in one-letter code: Glutathione peroxidase 1 (201 aa).

S32 carries the phosphoserine modification. U47 is an active-site residue. Position 47 (U47) is a non-standard amino acid, selenocysteine. Residues K86, K112, and K146 each carry the N6-acetyllysine; alternate modification. K86, K112, and K146 each carry N6-succinyllysine; alternate. S195 and S199 each carry phosphoserine.

It belongs to the glutathione peroxidase family. As to quaternary structure, homotetramer. Interacts with MIEN1. Post-translationally, during periods of oxidative stress, Sec-47 may react with a superoxide radical, irreversibly lose hydroselenide and be converted to dehydroalanine.

Its subcellular location is the cytoplasm. It is found in the mitochondrion. It carries out the reaction 2 glutathione + H2O2 = glutathione disulfide + 2 H2O. It catalyses the reaction a hydroperoxy polyunsaturated fatty acid + 2 glutathione = a hydroxy polyunsaturated fatty acid + glutathione disulfide + H2O. The catalysed reaction is tert-butyl hydroperoxide + 2 glutathione = tert-butanol + glutathione disulfide + H2O. The enzyme catalyses cumene hydroperoxide + 2 glutathione = 2-phenylpropan-2-ol + glutathione disulfide + H2O. It carries out the reaction (13S)-hydroperoxy-(9Z,11E)-octadecadienoate + 2 glutathione = (13S)-hydroxy-(9Z,11E)-octadecadienoate + glutathione disulfide + H2O. It catalyses the reaction (9S)-hydroperoxy-(10E,12Z)-octadecadienoate + 2 glutathione = (9S)-hydroxy-(10E,12Z)-octadecadienoate + glutathione disulfide + H2O. The catalysed reaction is (5S)-hydroperoxy-(6E,8Z,11Z,14Z)-eicosatetraenoate + 2 glutathione = (5S)-hydroxy-(6E,8Z,11Z,14Z)-eicosatetraenoate + glutathione disulfide + H2O. The enzyme catalyses (12S)-hydroperoxy-(5Z,8Z,10E,14Z)-eicosatetraenoate + 2 glutathione = (12S)-hydroxy-(5Z,8Z,10E,14Z)-eicosatetraenoate + glutathione disulfide + H2O. It carries out the reaction (12R)-hydroperoxy-(5Z,8Z,10E,14Z)-eicosatetraenoate + 2 glutathione = (12R)-hydroxy-(5Z,8Z,10E,14Z)-eicosatetraenoate + glutathione disulfide + H2O. It catalyses the reaction (15S)-hydroperoxy-(5Z,8Z,11Z,13E)-eicosatetraenoate + 2 glutathione = (15S)-hydroxy-(5Z,8Z,11Z,13E)-eicosatetraenoate + glutathione disulfide + H2O. The catalysed reaction is (5S)-hydroperoxy-(6E,8Z,11Z,14Z,17Z)-eicosapentaenoate + 2 glutathione = (5S)-hydroxy-(6E,8Z,11Z,14Z,17Z)-eicosapentaenoate + glutathione disulfide + H2O. The enzyme catalyses (12S)-hydroperoxy-(5Z,8Z,10E,14Z,17Z)-eicosapentaenoate + 2 glutathione = (12S)-hydroxy-(5Z,8Z,10E,14Z,17Z)-eicosapentaenoate + glutathione disulfide + H2O. It carries out the reaction (15S)-hydroperoxy-(5Z,8Z,11Z,13E,17Z)-eicosapentaenoate + 2 glutathione = (15S)-hydroxy-(5Z,8Z,11Z,13E,17Z)-eicosapentaenoate + glutathione disulfide + H2O. It catalyses the reaction (15S)-hydroperoxy-(11Z,13E)-eicosadienoate + 2 glutathione = (15S)-hydroxy-(11Z,13E)-eicosadienoate + glutathione disulfide + H2O. The catalysed reaction is (17S)-hydroperoxy-(4Z,7Z,10Z,13Z,15E,19Z)-docosahexaenoate + 2 glutathione = (17S)-hydroxy-(4Z,7Z,10Z,13Z,15E,19Z)-docosahexaenoate + glutathione disulfide + H2O. Catalyzes the reduction of hydroperoxides in a glutathione-dependent manner thus regulating cellular redox homeostasis. Can reduce small soluble hydroperoxides such as H2O2, cumene hydroperoxide and tert-butyl hydroperoxide, as well as several fatty acid-derived hydroperoxides. In platelets catalyzes the reduction of 12-hydroperoxyeicosatetraenoic acid, the primary product of the arachidonate 12-lipoxygenase pathway. In Pan troglodytes (Chimpanzee), this protein is Glutathione peroxidase 1 (GPX1).